A 402-amino-acid polypeptide reads, in one-letter code: Flavohemoprotein (402 aa).

The Globin domain occupies 1–136 (MLSEKTIEIV…IADAFISIEA (136 aa)). Residue histidine 85 coordinates heme b. Residues tyrosine 95 and glutamate 135 each act as charge relay system in the active site. Positions 147–402 (GGWKDFRNFV…EFFGPAASLQ (256 aa)) are reductase. Residues 150 to 260 (KDFRNFVVVK…SAPAGDFVLN (111 aa)) form the FAD-binding FR-type domain. FAD is bound by residues tyrosine 188 and 204–207 (RQYS). 273–278 (GVGITP) contacts NADP(+). An FAD-binding site is contributed by 394-397 (FFGP).

This sequence belongs to the globin family. Two-domain flavohemoproteins subfamily. It in the C-terminal section; belongs to the flavoprotein pyridine nucleotide cytochrome reductase family. Heme b is required as a cofactor. FAD serves as cofactor.

It carries out the reaction 2 nitric oxide + NADPH + 2 O2 = 2 nitrate + NADP(+) + H(+). The enzyme catalyses 2 nitric oxide + NADH + 2 O2 = 2 nitrate + NAD(+) + H(+). Its function is as follows. Is involved in NO detoxification in an aerobic process, termed nitric oxide dioxygenase (NOD) reaction that utilizes O(2) and NAD(P)H to convert NO to nitrate, which protects the bacterium from various noxious nitrogen compounds. Therefore, plays a central role in the inducible response to nitrosative stress. This is Flavohemoprotein from Bacillus anthracis.